A 330-amino-acid polypeptide reads, in one-letter code: Flotillin-like protein FloA (330 aa).

2 consecutive transmembrane segments (helical) span residues 6–26 and 28–48; these read LLLF…FTFV and VMLW…TLVG.

The protein belongs to the flotillin-like FloA family. In terms of assembly, homooligomerizes.

The protein resides in the cell membrane. It localises to the membrane raft. Found in functional membrane microdomains (FMM) that may be equivalent to eukaryotic membrane rafts. FMMs are highly dynamic and increase in number as cells age. Flotillins are thought to be important factors in membrane fluidity. The sequence is that of Flotillin-like protein FloA from Bacillus pumilus (strain SAFR-032).